Reading from the N-terminus, the 336-residue chain is Ornithine carbamoyltransferase, catabolic (336 aa).

Residues 57–60 (STRT), Q84, R108, and 135–138 (HPTQ) contribute to the carbamoyl phosphate site. Residues N168, D232, and 236–237 (SM) each bind L-ornithine. Carbamoyl phosphate-binding positions include 274-275 (CL) and R321.

It belongs to the aspartate/ornithine carbamoyltransferase superfamily. OTCase family.

It localises to the cytoplasm. The enzyme catalyses carbamoyl phosphate + L-ornithine = L-citrulline + phosphate + H(+). It participates in amino-acid degradation; L-arginine degradation via ADI pathway; carbamoyl phosphate from L-arginine: step 2/2. Its function is as follows. Reversibly catalyzes the transfer of the carbamoyl group from carbamoyl phosphate (CP) to the N(epsilon) atom of ornithine (ORN) to produce L-citrulline. The sequence is that of Ornithine carbamoyltransferase, catabolic from Burkholderia pseudomallei (strain K96243).